The primary structure comprises 453 residues: Ribosomal protein uS12 methylthiotransferase RimO (453 aa).

The MTTase N-terminal domain maps to 5–120; sequence PKVGFVSLGC…VMQAVHSHLP (116 aa). [4Fe-4S] cluster-binding residues include Cys-14, Cys-50, Cys-79, Cys-151, Cys-155, and Cys-158. Residues 137–382 form the Radical SAM core domain; it reads LTPRHYAYLK…MEVAEEVSAN (246 aa). The TRAM domain occupies 385 to 453; the sequence is QRKVGKTLKV…ADGHDLWGEV (69 aa).

It belongs to the methylthiotransferase family. RimO subfamily. [4Fe-4S] cluster serves as cofactor.

The protein localises to the cytoplasm. It carries out the reaction L-aspartate(89)-[ribosomal protein uS12]-hydrogen + (sulfur carrier)-SH + AH2 + 2 S-adenosyl-L-methionine = 3-methylsulfanyl-L-aspartate(89)-[ribosomal protein uS12]-hydrogen + (sulfur carrier)-H + 5'-deoxyadenosine + L-methionine + A + S-adenosyl-L-homocysteine + 2 H(+). In terms of biological role, catalyzes the methylthiolation of an aspartic acid residue of ribosomal protein uS12. In Burkholderia cenocepacia (strain HI2424), this protein is Ribosomal protein uS12 methylthiotransferase RimO.